We begin with the raw amino-acid sequence, 201 residues long: Pectinesterase inhibitor 7 (201 aa).

Positions 1-24 are cleaved as a signal peptide; it reads MARNFELSLILFVLYLSTAAIVMA. 2 cysteine pairs are disulfide-bonded: C42–C51 and C108–C159.

Belongs to the PMEI family. Binds reversibly to PME3 to inhibit its activity; the stability of the PME3-PMEI7 complex and the inhibition of the pectin methylesterase (PME) activity is pH-dependent, based on protonation status of amino-acids at the complex interface. Accumulates in etiolated hypocotyls (at protein level).

It is found in the secreted. Its subcellular location is the extracellular space. The protein resides in the apoplast. It localises to the cell wall. Its function is as follows. Pectin methylesterase (PME) inhibitor that can target PME3 in a pH-dependent manner, mainly in slightly acidic conditions (pH 6.0 and 5.0) but not at pH 7.0; this processus relies on changes in the protonation of amino acids involved in intermolecular and intramolecular interactions. Regulates homogalacturonan methylesterification during plant development. In Arabidopsis thaliana (Mouse-ear cress), this protein is Pectinesterase inhibitor 7.